A 190-amino-acid polypeptide reads, in one-letter code: Elongation factor P 2 (190 aa).

This sequence belongs to the elongation factor P family.

The protein localises to the cytoplasm. It functions in the pathway protein biosynthesis; polypeptide chain elongation. Functionally, involved in peptide bond synthesis. Stimulates efficient translation and peptide-bond synthesis on native or reconstituted 70S ribosomes in vitro. Probably functions indirectly by altering the affinity of the ribosome for aminoacyl-tRNA, thus increasing their reactivity as acceptors for peptidyl transferase. In Chlamydia trachomatis serovar D (strain ATCC VR-885 / DSM 19411 / UW-3/Cx), this protein is Elongation factor P 2 (efp2).